Here is a 459-residue protein sequence, read N- to C-terminus: Putrescine aminotransferase (459 aa).

Pyridoxal 5'-phosphate contacts are provided by residues 150–151 and glutamine 274; that span reads GT. Lysine 300 is modified (N6-(pyridoxal phosphate)lysine). Position 332 (threonine 332) interacts with pyridoxal 5'-phosphate.

This sequence belongs to the class-III pyridoxal-phosphate-dependent aminotransferase family. Putrescine aminotransferase subfamily. The cofactor is pyridoxal 5'-phosphate.

The enzyme catalyses an alkane-alpha,omega-diamine + 2-oxoglutarate = an omega-aminoaldehyde + L-glutamate. It catalyses the reaction putrescine + 2-oxoglutarate = 1-pyrroline + L-glutamate + H2O. It carries out the reaction cadaverine + 2-oxoglutarate = 5-aminopentanal + L-glutamate. It participates in amine and polyamine degradation; putrescine degradation; 4-aminobutanal from putrescine (transaminase route): step 1/1. Catalyzes the aminotransferase reaction from putrescine to 2-oxoglutarate, leading to glutamate and 4-aminobutanal, which spontaneously cyclizes to form 1-pyrroline. This is the first step in one of two pathways for putrescine degradation, where putrescine is converted into 4-aminobutanoate (gamma-aminobutyrate or GABA) via 4-aminobutanal. Also functions as a cadaverine transaminase in a a L-lysine degradation pathway to succinate that proceeds via cadaverine, glutarate and L-2-hydroxyglutarate. This is Putrescine aminotransferase from Escherichia coli O6:K15:H31 (strain 536 / UPEC).